The following is a 461-amino-acid chain: Photosystem II CP43 reaction center protein (461 aa).

Residues Met1 to Glu2 constitute a propeptide that is removed on maturation. Thr3 is subject to N-acetylthreonine. The residue at position 3 (Thr3) is a Phosphothreonine. The next 5 helical transmembrane spans lie at Leu57–Ala81, Leu122–Asn143, Lys166–Thr188, Thr243–Ser263, and Trp279–Ser300. Position 355 (Glu355) interacts with [CaMn4O5] cluster. A helical membrane pass occupies residues Arg435–Pro459.

It belongs to the PsbB/PsbC family. PsbC subfamily. In terms of assembly, PSII is composed of 1 copy each of membrane proteins PsbA, PsbB, PsbC, PsbD, PsbE, PsbF, PsbH, PsbI, PsbJ, PsbK, PsbL, PsbM, PsbT, PsbX, PsbY, PsbZ, Psb30/Ycf12, at least 3 peripheral proteins of the oxygen-evolving complex and a large number of cofactors. It forms dimeric complexes. Binds multiple chlorophylls and provides some of the ligands for the Ca-4Mn-5O cluster of the oxygen-evolving complex. It may also provide a ligand for a Cl- that is required for oxygen evolution. PSII binds additional chlorophylls, carotenoids and specific lipids. serves as cofactor.

It localises to the plastid. Its subcellular location is the chloroplast thylakoid membrane. In terms of biological role, one of the components of the core complex of photosystem II (PSII). It binds chlorophyll and helps catalyze the primary light-induced photochemical processes of PSII. PSII is a light-driven water:plastoquinone oxidoreductase, using light energy to abstract electrons from H(2)O, generating O(2) and a proton gradient subsequently used for ATP formation. This Tetradesmus obliquus (Green alga) protein is Photosystem II CP43 reaction center protein.